Consider the following 161-residue polypeptide: Regulator of ribonuclease activity A (161 aa).

It belongs to the RraA family. In terms of assembly, homotrimer. Binds to both RNA-binding sites in the C-terminal region of Rne and to RhlB.

The protein resides in the cytoplasm. Globally modulates RNA abundance by binding to RNase E (Rne) and regulating its endonucleolytic activity. Can modulate Rne action in a substrate-dependent manner by altering the composition of the degradosome. Modulates RNA-binding and helicase activities of the degradosome. The sequence is that of Regulator of ribonuclease activity A from Idiomarina loihiensis (strain ATCC BAA-735 / DSM 15497 / L2-TR).